Reading from the N-terminus, the 599-residue chain is Sulfite reductase [NADPH] flavoprotein alpha-component (599 aa).

Residues 64-202 (ITIISASQTG…AASEWRARVV (139 aa)) form the Flavodoxin-like domain. FMN-binding positions include 70-75 (SQTGNA), 117-120 (STQG), and 153-162 (LGDSSYEFFC). An FAD-binding FR-type domain is found at 234–448 (DAPLAASLSV…IEHNDNFRLP (215 aa)). FAD contacts are provided by residues Thr-322, Ala-356, 386 to 389 (RLYS), 404 to 406 (TVG), Tyr-410, and 419 to 422 (GGAS). NADP(+) is bound by residues 519–520 (SR), 525–529 (KIYVQ), and Asp-561. Residue Tyr-599 participates in FAD binding.

Belongs to the NADPH-dependent sulphite reductase flavoprotein subunit CysJ family. It in the N-terminal section; belongs to the flavodoxin family. The protein in the C-terminal section; belongs to the flavoprotein pyridine nucleotide cytochrome reductase family. Alpha(8)-beta(8). The alpha component is a flavoprotein, the beta component is a hemoprotein. FAD serves as cofactor. FMN is required as a cofactor.

It carries out the reaction hydrogen sulfide + 3 NADP(+) + 3 H2O = sulfite + 3 NADPH + 4 H(+). The protein operates within sulfur metabolism; hydrogen sulfide biosynthesis; hydrogen sulfide from sulfite (NADPH route): step 1/1. Component of the sulfite reductase complex that catalyzes the 6-electron reduction of sulfite to sulfide. This is one of several activities required for the biosynthesis of L-cysteine from sulfate. The flavoprotein component catalyzes the electron flow from NADPH -&gt; FAD -&gt; FMN to the hemoprotein component. The chain is Sulfite reductase [NADPH] flavoprotein alpha-component from Escherichia coli O6:K15:H31 (strain 536 / UPEC).